The sequence spans 132 residues: Small ribosomal subunit protein uS8 (132 aa).

The protein belongs to the universal ribosomal protein uS8 family. As to quaternary structure, part of the 30S ribosomal subunit. Contacts proteins S5 and S12.

In terms of biological role, one of the primary rRNA binding proteins, it binds directly to 16S rRNA central domain where it helps coordinate assembly of the platform of the 30S subunit. The sequence is that of Small ribosomal subunit protein uS8 from Flavobacterium psychrophilum (strain ATCC 49511 / DSM 21280 / CIP 103535 / JIP02/86).